The primary structure comprises 179 residues: Cytoglobin-2 (179 aa).

One can recognise a Globin domain in the interval 18–167; that stretch reads PLSDAEMEII…VYWHVTGAYT (150 aa). Histidine 81 and histidine 113 together coordinate heme b.

Belongs to the globin family. In terms of assembly, monomeric.

The protein resides in the cytoplasm. It localises to the nucleus. The enzyme catalyses Fe(II)-heme b-[protein] + nitric oxide + O2 = Fe(III)-heme b-[protein] + nitrate. The catalysed reaction is Fe(III)-heme b-[protein] + nitric oxide + H2O = Fe(II)-heme b-[protein] + nitrite + 2 H(+). It carries out the reaction 2 superoxide + 2 H(+) = H2O2 + O2. It catalyses the reaction H2O2 + AH2 = A + 2 H2O. In terms of biological role, probable multifunctional globin with a hexacoordinated heme iron required for the catalysis of various reactions depending on redox condition of the cell as well as oxygen availability. Has a nitric oxide dioxygenase (NOD) activity and is most probably involved in cell-mediated and oxygen-dependent nitric oxide consumption. Under normoxic conditions functions as a nitric oxide dioxygenase (NOD) but under hypoxic conditions the globin may switch its function to that of a nitrite (NO2) reductase (NiR), generating nitric oxide. Could also have peroxidase and superoxide dismutase activities, detoxifying reactive oxygen species and protecting cells against oxidative stress. Also binds dioxygen with low affinity and could function as an oxygen sensor but has probably no function as a respiratory oxygen carrier. The polypeptide is Cytoglobin-2 (Oryzias latipes (Japanese rice fish)).